The following is a 271-amino-acid chain: Regulatory protein RecX (271 aa).

The protein belongs to the RecX family.

The protein localises to the cytoplasm. In terms of biological role, modulates RecA activity. This chain is Regulatory protein RecX, found in Lactobacillus delbrueckii subsp. bulgaricus (strain ATCC 11842 / DSM 20081 / BCRC 10696 / JCM 1002 / NBRC 13953 / NCIMB 11778 / NCTC 12712 / WDCM 00102 / Lb 14).